A 353-amino-acid chain; its full sequence is MTEPLKPRIDFDGPLEVDQNPKFRAQQTFDENQAQNFAPATLDEAPEEEGQVEAVMDAALRPKRSLWRKMVMGGLALFGASVVGQGVQWTMNAWQTQDWVALGGCAAGALIIGAGVGSVVTEWQCLWCLRQRAHERDEARDLLHSHGTGKGRAFCEKLAQQAGIDQSHPALQRWYASIHETQNDREVVSLYAHLVQPVLDAQARREISRSAAESTLMIAVSPLALVDMAFIAWRNLRLINRIATLYGIELGYYSRLRLFKLVLLNIAFAGASELVREVGMDWMSQDLAARLSTRAAQGIGAGLLTARLGIKAMELCRPLPWIDDDKPRLGDFRRQLIGQVKETLQKGKTPSEK.

3 helical membrane passes run 70–90 (MVMG…VQWT), 100–120 (VALG…GSVV), and 213–233 (ESTL…FIAW).

It belongs to the UPF0283 family.

It localises to the cell inner membrane. This is UPF0283 membrane protein YcjF from Shigella sonnei (strain Ss046).